Here is a 171-residue protein sequence, read N- to C-terminus: Inosine/xanthosine triphosphatase (171 aa).

A substrate-binding site is contributed by 8 to 13 (TTNPAK). A Mg(2+)-binding site is contributed by Glu-38.

Belongs to the YjjX NTPase family. Homodimer. The cofactor is Mg(2+). Mn(2+) is required as a cofactor.

The enzyme catalyses XTP + H2O = XDP + phosphate + H(+). It carries out the reaction ITP + H2O = IDP + phosphate + H(+). In terms of biological role, phosphatase that hydrolyzes non-canonical purine nucleotides such as XTP and ITP to their respective diphosphate derivatives. Probably excludes non-canonical purines from DNA/RNA precursor pool, thus preventing their incorporation into DNA/RNA and avoiding chromosomal lesions. This Klebsiella pneumoniae (strain 342) protein is Inosine/xanthosine triphosphatase.